A 473-amino-acid chain; its full sequence is Ribulose bisphosphate carboxylase large chain (473 aa).

Substrate contacts are provided by N116 and T166. K168 acts as the Proton acceptor in catalysis. Substrate is bound at residue K170. Positions 194, 196, and 197 each coordinate Mg(2+). At K194 the chain carries N6-carboxylysine. Catalysis depends on H287, which acts as the Proton acceptor. Substrate-binding residues include R288, H320, and S372.

It belongs to the RuBisCO large chain family. Type I subfamily. Heterohexadecamer of 8 large chains and 8 small chains. Mg(2+) is required as a cofactor.

It carries out the reaction 2 (2R)-3-phosphoglycerate + 2 H(+) = D-ribulose 1,5-bisphosphate + CO2 + H2O. It catalyses the reaction D-ribulose 1,5-bisphosphate + O2 = 2-phosphoglycolate + (2R)-3-phosphoglycerate + 2 H(+). Functionally, ruBisCO catalyzes two reactions: the carboxylation of D-ribulose 1,5-bisphosphate, the primary event in carbon dioxide fixation, as well as the oxidative fragmentation of the pentose substrate. Both reactions occur simultaneously and in competition at the same active site. The protein is Ribulose bisphosphate carboxylase large chain of Nitrosospira sp. (strain TCH716).